The primary structure comprises 500 residues: MLNINFVNEESSTNQGLVVFIDEQLKLDSNLIGLDQQHHGLISKTIQNKLQFTGKYGQIKVIPSVIKSGEVRYLIIAGLGNEEKLTEAKIEELGGKILQHAICAKISTICLKLTNRISRFTSQTFASLVASGAFLASYRFNKYRTTLKEAEKFAVESIEIFTDNSTEAAKLFEVKKLIAEAVFFTRDICNEPSNIKTPQVYAERIVDILEPFGVDVDVIGEREMKNLGMGALLGVGQGSQNESKLVVMEYKGGNKDVPTIALVGKGVIFDTGGISLKPSSNMHLMRYDMGGSAAVVGAMIAVAGQKLPVNIVGVVGLVENMPSGNAQRPGDVVTTMSGQTAEVLNTDAEGRLVLADAVWYAQEKFKPKCVIDVATLTGAITVALGSTYAGCFSNNDELADKLIKVGEEVNEKLWRMPLHDEYDAMINSDIADMANIGNVPGAAGSCTAAHFIKRFIKDGVDWAHLDIAGVANSNKASALGPKGAVGYGVRLLEKFIKEYI.

Residues K265 and D270 each contribute to the Mn(2+) site. K277 is a catalytic residue. 3 residues coordinate Mn(2+): D288, D347, and E349. R351 is a catalytic residue.

This sequence belongs to the peptidase M17 family. It depends on Mn(2+) as a cofactor.

Its subcellular location is the cytoplasm. The enzyme catalyses Release of an N-terminal amino acid, Xaa-|-Yaa-, in which Xaa is preferably Leu, but may be other amino acids including Pro although not Arg or Lys, and Yaa may be Pro. Amino acid amides and methyl esters are also readily hydrolyzed, but rates on arylamides are exceedingly low.. The catalysed reaction is Release of an N-terminal amino acid, preferentially leucine, but not glutamic or aspartic acids.. Functionally, presumably involved in the processing and regular turnover of intracellular proteins. Catalyzes the removal of unsubstituted N-terminal amino acids from various peptides. This is Probable cytosol aminopeptidase from Rickettsia felis (strain ATCC VR-1525 / URRWXCal2) (Rickettsia azadi).